The chain runs to 178 residues: Stathmin-2-A (178 aa).

Positions 38 to 178 (DDMEIKQLNK…RNKEQLELSG (141 aa)) constitute an SLD domain. The stretch at 75–178 (KKKDVSLGEI…RNKEQLELSG (104 aa)) forms a coiled coil.

This sequence belongs to the stathmin family. As to expression, nervous tissue.

It localises to the cytoplasm. Its subcellular location is the membrane. The protein resides in the cell projection. The protein localises to the lamellipodium. This is Stathmin-2-A (stmn2-a) from Xenopus laevis (African clawed frog).